A 522-amino-acid polypeptide reads, in one-letter code: Zinc finger and BTB domain-containing protein 18 (522 aa).

The BTB domain occupies 24–91; the sequence is CDCTVLVGDA…MYEGKLQFKD (68 aa). Positions 121 to 143 are enriched in basic and acidic residues; sequence ATTEADSTKKEEDASSCSDKVES. The interval 121 to 166 is disordered; that stretch reads ATTEADSTKKEEDASSCSDKVESLSDGSSHMAGDLPSDEDEGEDDK. At S157 the chain carries Phosphoserine. A Glycyl lysine isopeptide (Lys-Gly) (interchain with G-Cter in SUMO2) cross-link involves residue K273. The interval 310–427 is interaction with DNMT3A; sequence EPAHLAPLRE…TFSCMYTLKR (118 aa). 4 C2H2-type zinc fingers span residues 370 to 392, 410 to 432, 438 to 460, and 466 to 489; these read FMCP…LSTH, PTCS…ERTH, YTCT…AVVH, and HACK…RKFH. A phosphoserine mark is found at S516 and S517.

Belongs to the krueppel C2H2-type zinc-finger protein family. ZBTB18 subfamily. In terms of assembly, interacts with DNMT3A.

The protein resides in the nucleus. Functionally, transcriptional repressor that plays a role in various developmental processes such as myogenesis and brain development. Specifically binds the consensus DNA sequence 5'-[AC]ACATCTG[GT][AC]-3' which contains the E box core, and acts by recruiting chromatin remodeling multiprotein complexes. Plays a key role in myogenesis by directly repressing the expression of ID2 and ID3, 2 inhibitors of skeletal myogenesis. Also involved in controlling cell division of progenitor cells and regulating the survival of postmitotic cortical neurons. May also play a role in the organization of chromosomes in the nucleus. This chain is Zinc finger and BTB domain-containing protein 18 (Zbtb18), found in Rattus norvegicus (Rat).